We begin with the raw amino-acid sequence, 883 residues long: DNA mismatch repair protein MutS (883 aa).

602–609 (GPNMSGKS) is a binding site for ATP.

This sequence belongs to the DNA mismatch repair MutS family.

Its function is as follows. This protein is involved in the repair of mismatches in DNA. It is possible that it carries out the mismatch recognition step. This protein has a weak ATPase activity. This Staphylococcus haemolyticus (strain JCSC1435) protein is DNA mismatch repair protein MutS.